The primary structure comprises 241 residues: MSTLFISDIHLCAQRPDMTAALVRFLAHDAPGADALYVLGDLFEFWIGDDDPNPLHGEVADAFAALSQQGVPLYFIHGNRDFLLGQAFAKRAGMTLLGDPCVIELYGERVVLSHGDLLCTLDEGYQKFRRITQLKWLRWLFLRLPLARRQAIAHKMRGQSQMENAHKSQTIMDVTPAAVDQMLRQHDCRMMIHGHTHRPAIHDFQLDGAPARRIVLGDWFEQGSVLICRPGEQRLEQHALI.

Residues D8, H10, D41, N79, and H114 each contribute to the Mn(2+) site. A substrate-binding site is contributed by 79 to 80 (NR). Substrate contacts are provided by D122, S160, N164, K167, and H195. H195 and H197 together coordinate Mn(2+).

It belongs to the LpxH family. The cofactor is Mn(2+).

It localises to the cell inner membrane. It catalyses the reaction UDP-2-N,3-O-bis[(3R)-3-hydroxytetradecanoyl]-alpha-D-glucosamine + H2O = 2-N,3-O-bis[(3R)-3-hydroxytetradecanoyl]-alpha-D-glucosaminyl 1-phosphate + UMP + 2 H(+). The protein operates within glycolipid biosynthesis; lipid IV(A) biosynthesis; lipid IV(A) from (3R)-3-hydroxytetradecanoyl-[acyl-carrier-protein] and UDP-N-acetyl-alpha-D-glucosamine: step 4/6. Hydrolyzes the pyrophosphate bond of UDP-2,3-diacylglucosamine to yield 2,3-diacylglucosamine 1-phosphate (lipid X) and UMP by catalyzing the attack of water at the alpha-P atom. Involved in the biosynthesis of lipid A, a phosphorylated glycolipid that anchors the lipopolysaccharide to the outer membrane of the cell. In Aeromonas hydrophila subsp. hydrophila (strain ATCC 7966 / DSM 30187 / BCRC 13018 / CCUG 14551 / JCM 1027 / KCTC 2358 / NCIMB 9240 / NCTC 8049), this protein is UDP-2,3-diacylglucosamine hydrolase.